Consider the following 54-residue polypeptide: UPF0391 membrane protein BAV1230 (54 aa).

The next 2 helical transmembrane spans lie at 5-25 (AAVF…GIAA) and 27-47 (AAGI…LSVL).

Belongs to the UPF0391 family.

Its subcellular location is the cell membrane. This is UPF0391 membrane protein BAV1230 from Bordetella avium (strain 197N).